Reading from the N-terminus, the 515-residue chain is Putative asparagine synthetase [glutamine-hydrolyzing] 2 (515 aa).

The For GATase activity role is filled by cysteine 2. Residues cysteine 2–aspartate 229 form the Glutamine amidotransferase type-2 domain. L-glutamine-binding positions include arginine 52–leucine 56, asparagine 92–glutamate 94, and aspartate 114. ATP-binding positions include isoleucine 306 and serine 378–glycine 379.

Belongs to the asparagine synthetase family.

It catalyses the reaction L-aspartate + L-glutamine + ATP + H2O = L-asparagine + L-glutamate + AMP + diphosphate + H(+). Its pathway is amino-acid biosynthesis; L-asparagine biosynthesis; L-asparagine from L-aspartate (L-Gln route): step 1/1. This Methanocaldococcus jannaschii (strain ATCC 43067 / DSM 2661 / JAL-1 / JCM 10045 / NBRC 100440) (Methanococcus jannaschii) protein is Putative asparagine synthetase [glutamine-hydrolyzing] 2.